A 246-amino-acid polypeptide reads, in one-letter code: Proteasome subunit alpha (246 aa).

This sequence belongs to the peptidase T1A family. The 20S proteasome core is composed of 14 alpha and 14 beta subunits that assemble into four stacked heptameric rings, resulting in a barrel-shaped structure. The two inner rings, each composed of seven catalytic beta subunits, are sandwiched by two outer rings, each composed of seven alpha subunits. The catalytic chamber with the active sites is on the inside of the barrel. Has a gated structure, the ends of the cylinder being occluded by the N-termini of the alpha-subunits. Is capped at one or both ends by the proteasome regulatory ATPase, PAN.

It localises to the cytoplasm. Its activity is regulated as follows. The formation of the proteasomal ATPase PAN-20S proteasome complex, via the docking of the C-termini of PAN into the intersubunit pockets in the alpha-rings, triggers opening of the gate for substrate entry. Interconversion between the open-gate and close-gate conformations leads to a dynamic regulation of the 20S proteasome proteolysis activity. Functionally, component of the proteasome core, a large protease complex with broad specificity involved in protein degradation. This chain is Proteasome subunit alpha, found in Methanopyrus kandleri (strain AV19 / DSM 6324 / JCM 9639 / NBRC 100938).